The following is a 157-amino-acid chain: Probable succinate transporter subunit YjjB (157 aa).

A run of 4 helical transmembrane segments spans residues 8 to 28 (LALMQDMILSAIPAVGFAMVF), 55 to 75 (AGFNIEWSTFMASLLVGSIGI), 87 to 107 (VFTVAAVIPMFPGISAYTAMI), and 129 to 149 (FLKASSIVGALSIGLSVPGLW).

It belongs to the ThrE exporter (TC 2.A.79) family. The transporter is composed of YjjB and YjjP.

It localises to the cell inner membrane. Functionally, involved in succinate export with YjjP. Both proteins are required for export. The sequence is that of Probable succinate transporter subunit YjjB from Salmonella agona (strain SL483).